Consider the following 209-residue polypeptide: Uracil phosphoribosyltransferase (209 aa).

5-phospho-alpha-D-ribose 1-diphosphate-binding positions include R79, R104, and 131 to 139 (TPVVATANT). Uracil contacts are provided by residues I194 and 199–201 (GDA). D200 is a binding site for 5-phospho-alpha-D-ribose 1-diphosphate.

The protein belongs to the UPRTase family. It depends on Mg(2+) as a cofactor.

It catalyses the reaction UMP + diphosphate = 5-phospho-alpha-D-ribose 1-diphosphate + uracil. Its pathway is pyrimidine metabolism; UMP biosynthesis via salvage pathway; UMP from uracil: step 1/1. Allosterically activated by GTP. Its function is as follows. Catalyzes the conversion of uracil and 5-phospho-alpha-D-ribose 1-diphosphate (PRPP) to UMP and diphosphate. The protein is Uracil phosphoribosyltransferase of Bradyrhizobium diazoefficiens (strain JCM 10833 / BCRC 13528 / IAM 13628 / NBRC 14792 / USDA 110).